A 610-amino-acid chain; its full sequence is UvrABC system protein C (610 aa).

The GIY-YIG domain occupies 13–91 (HLPGVYRMYD…IKENQPKYNV (79 aa)). In terms of domain architecture, UVR spans 201-236 (GQVIEHLVQKMENAAQELDFEAAARFRDQIQSVRAV).

The protein belongs to the UvrC family. Interacts with UvrB in an incision complex.

It is found in the cytoplasm. In terms of biological role, the UvrABC repair system catalyzes the recognition and processing of DNA lesions. UvrC both incises the 5' and 3' sides of the lesion. The N-terminal half is responsible for the 3' incision and the C-terminal half is responsible for the 5' incision. This chain is UvrABC system protein C, found in Actinobacillus pleuropneumoniae serotype 3 (strain JL03).